The following is a 123-amino-acid chain: Small ribosomal subunit protein uS12cz/uS12cy (123 aa).

The protein belongs to the universal ribosomal protein uS12 family. As to quaternary structure, part of the 30S ribosomal subunit.

The protein localises to the plastid. The protein resides in the chloroplast. Functionally, with S4 and S5 plays an important role in translational accuracy. Located at the interface of the 30S and 50S subunits. In Gossypium hirsutum (Upland cotton), this protein is Small ribosomal subunit protein uS12cz/uS12cy (rps12-A).